A 547-amino-acid polypeptide reads, in one-letter code: MAAKQVLFADEARVRIVRGVNVLANAVKTTLGPKGRNVVLERSFGAPTVTKDGVSVAKEIELKDKFENIGAQLVKDVASKTSDNAGDGTTTATVLAQAVVQEGLKYVAAGFNPIDLKRGIDKAVAAAVEELKKLSKPVTTSKEIAQVGSISANSDASIGQIIADAMDKVGKEGVITVEDGKSLENELDVVEGMQFDRGYLSPYFINSPEKQVAALDDPYVLIYDKKVSNIRDLLPVLEQVAKSSRPLLIIAEDVEGEALATLVVNNIRGILKTTAVKAPGFGDRRKAMLEDIAILTGGTVISEETGMSLEKATLQDLGQAKRIEVAKENTTIIDGAGDGKSIEARVKQIRAQIEEATSDYDREKLQERVAKLAGGVAVIRVGAATEVEMKEKKARVEDALHATRAAVEEGVVPGGGVALLRAKQAITGLKGDTADQNAGIKLILRAVEEPLRTIVTNAGDEASVVVNTVLNGKGNYGYNAATGEYGDLVEQGVLDPTKVTRTALQNAASVASLLLTAEAAVVELMENKPAAAPAMPGGMGGMGGMDF.

ATP contacts are provided by residues 30–33 (TLGP), Lys-51, 87–91 (DGTTT), Gly-415, 479–481 (NAA), and Asp-495.

Belongs to the chaperonin (HSP60) family. As to quaternary structure, forms a cylinder of 14 subunits composed of two heptameric rings stacked back-to-back. Interacts with the co-chaperonin GroES.

It localises to the cytoplasm. It carries out the reaction ATP + H2O + a folded polypeptide = ADP + phosphate + an unfolded polypeptide.. Its function is as follows. Together with its co-chaperonin GroES, plays an essential role in assisting protein folding. The GroEL-GroES system forms a nano-cage that allows encapsulation of the non-native substrate proteins and provides a physical environment optimized to promote and accelerate protein folding. The sequence is that of Chaperonin GroEL from Bordetella pertussis (strain Tohama I / ATCC BAA-589 / NCTC 13251).